Reading from the N-terminus, the 1016-residue chain is DNA polymerase I (1016 aa).

A 5'-3' exonuclease domain is found at 1-308; sequence MPNSIWTSSD…MEFTTLTRRV (308 aa). The disordered stretch occupies residues 334 to 361; the sequence is GPDLDAAEPEPVAGGIPEVSGESVPMPP. Positions 394 to 630 constitute a 3'-5' exonuclease domain; the sequence is SAYVTIRDLV…MEARGITVDR (237 aa). Residues 768–1016 are polymerase; it reads GRKIRTAFIS…RAATNWDEAH (249 aa).

This sequence belongs to the DNA polymerase type-A family. In terms of assembly, single-chain monomer with multiple functions.

The enzyme catalyses DNA(n) + a 2'-deoxyribonucleoside 5'-triphosphate = DNA(n+1) + diphosphate. In addition to polymerase activity, this DNA polymerase exhibits 3'-5' and 5'-3' exonuclease activity. The sequence is that of DNA polymerase I (polA) from Rhizobium leguminosarum.